The primary structure comprises 128 residues: MESYQNQSGAQQTHQQLDQFGNPFPATTGAYGTAGGAPAVAEGGGLSGMLHRSGSSSSSSSEDDGLGGRRRKKKGITEKIKEKLPGHHDSNKTSSLGSTTTAYDTGTVHHEKKGMMEKIKEKLPGGHH.

Residues 1-19 (MESYQNQSGAQQTHQQLDQ) show a composition bias toward polar residues. The tract at residues 1 to 128 (MESYQNQSGA…IKEKLPGGHH (128 aa)) is disordered. Composition is skewed to low complexity over residues 23–41 (PFPA…PAVA) and 48–60 (GMLH…SSSS). Residues 75–91 (GITEKIKEKLPGHHDSN) are compositionally biased toward basic and acidic residues. A compositionally biased stretch (polar residues) spans 92 to 104 (KTSSLGSTTTAYD). Residues 107-128 (TVHHEKKGMMEKIKEKLPGGHH) are compositionally biased toward basic and acidic residues.

The protein belongs to the plant dehydrin family.

This chain is Dehydrin Xero 1 (XERO1), found in Arabidopsis thaliana (Mouse-ear cress).